Reading from the N-terminus, the 91-residue chain is DNA-binding protein HU-beta 2 (91 aa).

It belongs to the bacterial histone-like protein family.

Histone-like DNA-binding protein which is capable of wrapping DNA to stabilize it, and thus to prevent its denaturation under extreme environmental conditions. In Neisseria meningitidis serogroup A / serotype 4A (strain DSM 15465 / Z2491), this protein is DNA-binding protein HU-beta 2 (hupB2).